A 296-amino-acid chain; its full sequence is Enoyl-CoA hydratase AFT3-1 (296 aa).

A Peroxisomal targeting signal type 1 motif is present at residues 294 to 296 (PKL).

Belongs to the enoyl-CoA hydratase/isomerase family.

Its subcellular location is the peroxisome. It catalyses the reaction a (3S)-3-hydroxyacyl-CoA = a (2E)-enoyl-CoA + H2O. The enzyme catalyses a 4-saturated-(3S)-3-hydroxyacyl-CoA = a (3E)-enoyl-CoA + H2O. It functions in the pathway mycotoxin biosynthesis. In terms of biological role, enoyl-CoA hydratase; part of the gene clusters that mediate the biosynthesis of the host-selective toxins (HSTs) AF-toxins responsible for Alternaria black spot of strawberry disease by the strawberry pathotype. AF-toxin I and III are valine derivatives of 2,3-dyhydroxy-isovaleric acid and 2-hydroxy-isovaleric acid respectively, while AF II is an isoleucine derivative of 2-hydroxy-valeric acid. These derivatives are bound to a 9,10-epoxy-8-hydroxy-9-methyl-decatrienoic acid (EDA) moiety. On cellular level, AF-toxins affect plasma membrane of susceptible cells and cause a sudden increase in loss of K(+) after a few minutes of toxin treatment. The aldo-keto reductase AFTS1 catalyzes the conversion of 2-keto-isovaleric acid (2-KIV) to 2-hydroxy-isovaleric acid (2-HIV) by reduction of its ketone to an alcohol. The acyl-CoA ligase AFT1, the hydrolase AFT2 and the enoyl-CoA hydratases AFT3 and AFT6, but also the polyketide synthase AFT9, the acyl-CoA dehydrogenase AFT10, the cytochrome P450 monooxygenase AFT11 and the oxidoreductase AFT12 are all involved in the biosynthesis of the AK-, AF- and ACT-toxin common EDA structural moiety. The exact function of each enzyme, and of additional enzymes identified within the AF-toxin clusters have still to be determined. This chain is Enoyl-CoA hydratase AFT3-1 (AFT3-1), found in Alternaria alternata (Alternaria rot fungus).